The following is an 842-amino-acid chain: DNA topoisomerase-like protein cin-4 (842 aa).

Residues 1-26 (MSEEDRNVFTSIDKKGGGSKQMDDLN) are compositionally biased toward basic and acidic residues. Residues 1–50 (MSEEDRNVFTSIDKKGGGSKQMDDLNQKCPKRKTSKLKGIPKLEDANDAG) form a disordered region. Residues 314–783 (IPCLVDGLKP…TWQDLWITDL (470 aa)) form the Topo IIA-type catalytic domain.

It belongs to the type II topoisomerase family.

Functionally, plays a role in the removal of cohesin from kinetochores on mitotic chromosomes and is required for centromere resolution. The polypeptide is DNA topoisomerase-like protein cin-4 (Caenorhabditis elegans).